Here is a 483-residue protein sequence, read N- to C-terminus: Regulatory protein ViaA (483 aa).

This sequence belongs to the ViaA family. In terms of assembly, homodimer. Interacts with RavA.

The protein resides in the cytoplasm. In terms of biological role, component of the RavA-ViaA chaperone complex, which may act on the membrane to optimize the function of some of the respiratory chains. ViaA stimulates the ATPase activity of RavA. This is Regulatory protein ViaA from Escherichia coli (strain SMS-3-5 / SECEC).